We begin with the raw amino-acid sequence, 192 residues long: Pyridoxal 5'-phosphate synthase subunit PdxT (192 aa).

50–52 (GES) is an L-glutamine binding site. The active-site Nucleophile is the cysteine 82. L-glutamine is bound by residues arginine 109 and 136-137 (IR). Active-site charge relay system residues include histidine 172 and glutamate 174.

It belongs to the glutaminase PdxT/SNO family. As to quaternary structure, in the presence of PdxS, forms a dodecamer of heterodimers. Only shows activity in the heterodimer.

It catalyses the reaction aldehydo-D-ribose 5-phosphate + D-glyceraldehyde 3-phosphate + L-glutamine = pyridoxal 5'-phosphate + L-glutamate + phosphate + 3 H2O + H(+). It carries out the reaction L-glutamine + H2O = L-glutamate + NH4(+). The protein operates within cofactor biosynthesis; pyridoxal 5'-phosphate biosynthesis. Functionally, catalyzes the hydrolysis of glutamine to glutamate and ammonia as part of the biosynthesis of pyridoxal 5'-phosphate. The resulting ammonia molecule is channeled to the active site of PdxS. The chain is Pyridoxal 5'-phosphate synthase subunit PdxT from Haemophilus influenzae (strain PittEE).